A 512-amino-acid chain; its full sequence is tRNA-2-methylthio-N(6)-dimethylallyladenosine synthase (512 aa).

Residues arginine 23–histidine 139 form the MTTase N-terminal domain. [4Fe-4S] cluster is bound by residues cysteine 32, cysteine 68, cysteine 102, cysteine 176, cysteine 180, and cysteine 183. In terms of domain architecture, Radical SAM core spans arginine 162 to glutamate 398. Positions arginine 401–isoleucine 469 constitute a TRAM domain. Residues alanine 477–cysteine 512 form a disordered region.

It belongs to the methylthiotransferase family. MiaB subfamily. Monomer. The cofactor is [4Fe-4S] cluster.

The protein resides in the cytoplasm. It carries out the reaction N(6)-dimethylallyladenosine(37) in tRNA + (sulfur carrier)-SH + AH2 + 2 S-adenosyl-L-methionine = 2-methylsulfanyl-N(6)-dimethylallyladenosine(37) in tRNA + (sulfur carrier)-H + 5'-deoxyadenosine + L-methionine + A + S-adenosyl-L-homocysteine + 2 H(+). Catalyzes the methylthiolation of N6-(dimethylallyl)adenosine (i(6)A), leading to the formation of 2-methylthio-N6-(dimethylallyl)adenosine (ms(2)i(6)A) at position 37 in tRNAs that read codons beginning with uridine. The polypeptide is tRNA-2-methylthio-N(6)-dimethylallyladenosine synthase (Mycolicibacterium smegmatis (strain ATCC 700084 / mc(2)155) (Mycobacterium smegmatis)).